A 142-amino-acid chain; its full sequence is Probable signal recognition particle 19 kDa protein (142 aa).

Positions 115 to 142 (KTRQPGYTAPSVASSSAAAAGKKNKKKK) are disordered. The segment covering 123–135 (APSVASSSAAAAG) has biased composition (low complexity).

It belongs to the SRP19 family. Component of a signal recognition particle complex that consists of a 7SL RNA molecule of 300 nucleotides and six protein subunits: srpa-72, srpa-68, SRP54, F37F2.2/SRP19, F25G6.8/SRP14 and ZK512.4/SRP9.

It is found in the cytoplasm. Its subcellular location is the nucleus. The protein localises to the nucleolus. In terms of biological role, component of the signal recognition particle (SRP) complex, a ribonucleoprotein complex that mediates the cotranslational targeting of secretory and membrane proteins to the endoplasmic reticulum (ER). Binds directly to 7SL RNA. Mediates binding of SRP54 to the SRP complex. This chain is Probable signal recognition particle 19 kDa protein, found in Caenorhabditis elegans.